A 513-amino-acid polypeptide reads, in one-letter code: ATP synthase subunit alpha 1 (513 aa).

Residue Gly169–Thr176 participates in ATP binding.

It belongs to the ATPase alpha/beta chains family. As to quaternary structure, F-type ATPases have 2 components, CF(1) - the catalytic core - and CF(0) - the membrane proton channel. CF(1) has five subunits: alpha(3), beta(3), gamma(1), delta(1), epsilon(1). CF(0) has three main subunits: a(1), b(2) and c(9-12). The alpha and beta chains form an alternating ring which encloses part of the gamma chain. CF(1) is attached to CF(0) by a central stalk formed by the gamma and epsilon chains, while a peripheral stalk is formed by the delta and b chains.

The protein resides in the cell inner membrane. The catalysed reaction is ATP + H2O + 4 H(+)(in) = ADP + phosphate + 5 H(+)(out). Produces ATP from ADP in the presence of a proton gradient across the membrane. The alpha chain is a regulatory subunit. This Nitrosomonas eutropha (strain DSM 101675 / C91 / Nm57) protein is ATP synthase subunit alpha 1.